We begin with the raw amino-acid sequence, 295 residues long: 4-hydroxy-tetrahydrodipicolinate synthase (295 aa).

Position 47 (T47) interacts with pyruvate. The active-site Proton donor/acceptor is Y135. The active-site Schiff-base intermediate with substrate is K163. I206 contributes to the pyruvate binding site.

The protein belongs to the DapA family. As to quaternary structure, homodimer.

It is found in the cytoplasm. The enzyme catalyses L-aspartate 4-semialdehyde + pyruvate = (2S,4S)-4-hydroxy-2,3,4,5-tetrahydrodipicolinate + H2O + H(+). It functions in the pathway amino-acid biosynthesis; L-lysine biosynthesis via DAP pathway; (S)-tetrahydrodipicolinate from L-aspartate: step 3/4. Its function is as follows. Catalyzes the condensation of (S)-aspartate-beta-semialdehyde [(S)-ASA] and pyruvate to 4-hydroxy-tetrahydrodipicolinate (HTPA). This chain is 4-hydroxy-tetrahydrodipicolinate synthase, found in Staphylococcus saprophyticus subsp. saprophyticus (strain ATCC 15305 / DSM 20229 / NCIMB 8711 / NCTC 7292 / S-41).